We begin with the raw amino-acid sequence, 228 residues long: Sugar fermentation stimulation protein homolog (228 aa).

It belongs to the SfsA family.

This is Sugar fermentation stimulation protein homolog from Desulfitobacterium hafniense (strain Y51).